Consider the following 537-residue polypeptide: uncharacterized protein (537 aa).

The segment at 10–56 (HHDVEPQNVEEEPPLTGQTIVTEDKLETSAKDKKHESPSMSEDEEGS) is disordered. Basic and acidic residues predominate over residues 31-46 (TEDKLETSAKDKKHES). 12 helical membrane-spanning segments follow: residues 90–110 (FVATVYTFLEVYVIWSSTACI), 133–153 (LFIVGNAFGPMLLGPMSDIFG), 156–176 (WVYVGSLILYIIFQIPQALAY), 180–200 (MMAINSAIAGAFGSSALANVA), 213–233 (GFGISLFVWGANAGASIGSPI), 243–263 (WFYWMNMIVGGFFVILCVLCP), 313–333 (PIIMALGLYNGFAYGLIFLYL), 348–368 (YMGANLTYLNFLVGVTIVVML), 393–413 (FLISLLTVWFFPAGLFWFAFT), 422–442 (SPLIAGGVLGVGDPQLWLAMI), 457–477 (IAAFTLPSFAIAAVLVHLGII), and 492–512 (AFISLSLVATIYVIYFFGHLI).

It belongs to the major facilitator superfamily. CAR1 family.

The protein localises to the endoplasmic reticulum. It is found in the golgi apparatus. It localises to the membrane. This is an uncharacterized protein from Schizosaccharomyces pombe (strain 972 / ATCC 24843) (Fission yeast).